The sequence spans 297 residues: Protoheme IX farnesyltransferase (297 aa).

9 consecutive transmembrane segments (helical) span residues 23-43 (VTQL…PGMP), 49-69 (VFGT…NCLI), 93-113 (IQVL…LYHL), 117-137 (LTMW…TVIL), 144-164 (NIVI…AAVA), 171-191 (AWVL…ALAL), 215-235 (RLHI…PYAI), 238-258 (SGAL…WYAW), and 275-295 (FSIL…WVGL).

Belongs to the UbiA prenyltransferase family. Protoheme IX farnesyltransferase subfamily.

The protein localises to the cell inner membrane. It carries out the reaction heme b + (2E,6E)-farnesyl diphosphate + H2O = Fe(II)-heme o + diphosphate. Its pathway is porphyrin-containing compound metabolism; heme O biosynthesis; heme O from protoheme: step 1/1. Converts heme B (protoheme IX) to heme O by substitution of the vinyl group on carbon 2 of heme B porphyrin ring with a hydroxyethyl farnesyl side group. The chain is Protoheme IX farnesyltransferase from Bordetella bronchiseptica (strain ATCC BAA-588 / NCTC 13252 / RB50) (Alcaligenes bronchisepticus).